The following is a 725-amino-acid chain: Ophiobolin F synthase (725 aa).

The tract at residues 1–322 is (7Z)-ophiobola-7,19-dien-3-ol synthase; it reads MEYKYSTIVD…RYHADAKFNE (322 aa). 2 residues coordinate Mg(2+): D93 and D97. Position 93 (D93) interacts with substrate. Positions 93-97 match the DDXXD 1 motif; sequence DDEID. Residues 182–185, N226, 230–234, and 313–314 contribute to the substrate site; these read RCMD, SYEKE, and RY. Positions 226 to 234 match the NSE/DTE motif; that stretch reads NDLFSYEKE. A geranylfarnesyl diphosphate synthase region spans residues 323-725; the sequence is LQMLRAEHGV…LRMMLELLKV (403 aa). The tract at residues 362 to 388 is disordered; the sequence is GVNGVNGKRKRSGEETADDARTNGNGI. Residues 373-382 are compositionally biased toward basic and acidic residues; that stretch reads SGEETADDAR. Isopentenyl diphosphate-binding residues include K436, R439, and H468. Mg(2+)-binding residues include D475 and D479. The DDXXD 2 motif lies at 475-479; it reads DDIED. R484 contributes to the dimethylallyl diphosphate binding site. R485 lines the isopentenyl diphosphate pocket. The dimethylallyl diphosphate site is built by K562, T563, Q601, N608, K618, and K628.

This sequence in the N-terminal section; belongs to the terpene synthase family. In the C-terminal section; belongs to the FPP/GGPP synthase family. Requires Mg(2+) as cofactor.

The enzyme catalyses isopentenyl diphosphate + (2E,6E)-farnesyl diphosphate = (2E,6E,10E)-geranylgeranyl diphosphate + diphosphate. It catalyses the reaction isopentenyl diphosphate + (2E,6E,10E)-geranylgeranyl diphosphate = (2E,6E,10E,14E)-geranylfarnesyl diphosphate + diphosphate. The catalysed reaction is (2E,6E,10E,14E)-geranylfarnesyl diphosphate + H2O = ophiobolin F + diphosphate. It participates in secondary metabolite biosynthesis; terpenoid biosynthesis. In terms of biological role, bifunctional sesterterpene synthase that converts isopentenyl diphosphate (IPP) and dimethylallyl diphosphate (DMAPP) into ophiobolin F. The C-terminal prenyltransferase (PT) domain of AcldOS converts isopentenyl diphosphate and dimethylallyl diphosphate into geranylfarnesyl diphosphate (GFPP), whereas the N-terminal terpene cyclase (TC) domain catalyzes the cyclization of GFPP to ophiobolin F. This Aspergillus calidoustus protein is Ophiobolin F synthase.